Here is a 367-residue protein sequence, read N- to C-terminus: Histidinol-phosphate aminotransferase (367 aa).

Lys-226 carries the N6-(pyridoxal phosphate)lysine modification.

The protein belongs to the class-II pyridoxal-phosphate-dependent aminotransferase family. Histidinol-phosphate aminotransferase subfamily. As to quaternary structure, homodimer. Pyridoxal 5'-phosphate serves as cofactor.

The enzyme catalyses L-histidinol phosphate + 2-oxoglutarate = 3-(imidazol-4-yl)-2-oxopropyl phosphate + L-glutamate. Its pathway is amino-acid biosynthesis; L-histidine biosynthesis; L-histidine from 5-phospho-alpha-D-ribose 1-diphosphate: step 7/9. The protein is Histidinol-phosphate aminotransferase of Aliarcobacter butzleri (strain RM4018) (Arcobacter butzleri).